An 845-amino-acid polypeptide reads, in one-letter code: Taste receptor type 1 member 3 (845 aa).

The N-terminal stretch at 1-18 is a signal peptide; it reads MAGLMLLSLMALLGLGAG. Over 19–568 the chain is Extracellular; that stretch reads APLCLSRQLR…FLAWGQPAVL (550 aa). N-linked (GlcNAc...) asparagine glycosylation is found at asparagine 128 and asparagine 262. Residues 569–589 form a helical membrane-spanning segment; that stretch reads VLLILLALALGLVLVALGLFI. The Cytoplasmic portion of the chain corresponds to 590 to 601; it reads RHRDSPLVQASG. A helical membrane pass occupies residues 602 to 622; sequence GPRACFGLACLGLVCLSVLLF. Residues 623 to 637 are Extracellular-facing; sequence PGQPGPASCLAQQPL. A helical membrane pass occupies residues 638-658; the sequence is LHLPLTGCLSTLFLQAAQIFV. Topologically, residues 659 to 680 are cytoplasmic; it reads GSELPSSWADQLRRCLQGPWAW. Residues 681–701 traverse the membrane as a helical segment; the sequence is LLVLLALLAEAALCAWYLVAF. The Extracellular portion of the chain corresponds to 702 to 727; it reads PPEVVTDWWVLPTQVLVHCRMRSWIS. Residues 728–748 traverse the membrane as a helical segment; that stretch reads FGLLHAINAMLAFLCFLGTFL. Topologically, residues 749–760 are cytoplasmic; sequence VQSRPGRYNGAR. A helical membrane pass occupies residues 761–781; sequence GLTFAMLAYFITWISFVPLFA. Over 782–789 the chain is Extracellular; sequence NVHVAYQP. Residues 790–810 traverse the membrane as a helical segment; that stretch reads TVQMAAILLCALGILATFHLP. Topologically, residues 811–845 are cytoplasmic; that stretch reads KCYLLLQQLELNNPEFFLGDDARGQGSSGSGGKET.

The protein belongs to the G-protein coupled receptor 3 family. TAS1R subfamily. As to quaternary structure, forms homodimers or heterodimers with TAS1R1 and TAS1R2.

It is found in the cell membrane. Its function is as follows. Putative taste receptor. TAS1R1/TAS1R3 responds to the umami taste stimulus (the taste of monosodium glutamate). TAS1R2/TAS1R3 recognizes diverse natural and synthetic sweeteners. TAS1R3 is essential for the recognition and response to the disaccharide trehalose. Sequence differences within and between species can significantly influence the selectivity and specificity of taste responses. In Canis lupus familiaris (Dog), this protein is Taste receptor type 1 member 3 (TAS1R3).